The chain runs to 472 residues: uncharacterized protein (472 aa).

The protein belongs to the IIV-6 198R family.

This is an uncharacterized protein from Acheta domesticus (House cricket).